Reading from the N-terminus, the 139-residue chain is MVEVVRNKRPPRGLVPRLRRALAALMEELGVGDKGVTVILTGDRRLRALKREWWGEDEATDVLSFPHYEPGDPFVPPHLGDIWISLDTARRQAEARGASLEEEVLVLAAHGLWHLLGHDHQKEEDWEGFRRVQERILAL.

Positions 110, 114, and 120 each coordinate Zn(2+).

This sequence belongs to the endoribonuclease YbeY family. Requires Zn(2+) as cofactor.

It is found in the cytoplasm. Single strand-specific metallo-endoribonuclease involved in late-stage 70S ribosome quality control and in maturation of the 3' terminus of the 16S rRNA. This chain is Endoribonuclease YbeY, found in Thermus thermophilus (strain ATCC BAA-163 / DSM 7039 / HB27).